We begin with the raw amino-acid sequence, 134 residues long: Interleukin-5 (134 aa).

The first 19 residues, 1–19 (MRMLLHLSLLALGAAYVYA), serve as a signal peptide directing secretion. Residue Thr22 is glycosylated (O-linked (GalNAc...) threonine). The N-linked (GlcNAc...) asparagine glycan is linked to Asn47.

Belongs to the IL-5 family. Homodimer; disulfide-linked. Interacts with IL5RA. Interacts with CSF2RB. As to expression, present in peripheral blood mononuclear cells.

It localises to the secreted. In terms of biological role, homodimeric cytokine expressed predominantly by T-lymphocytes and NK cells that plays an important role in the survival, differentiation, and chemotaxis of eosinophils. Also acts on activated and resting B-cells to induce immunoglobulin production, growth, and differentiation. Mechanistically, exerts its biological effects through a receptor composed of IL5RA subunit and the cytokine receptor common subunit beta/CSF2RB. Binding to the receptor leads to activation of various kinases including LYN, SYK and JAK2 and thereby propagates signals through the RAS-MAPK and JAK-STAT5 pathways respectively. The chain is Interleukin-5 (IL5) from Homo sapiens (Human).